We begin with the raw amino-acid sequence, 814 residues long: Outer membrane usher protein SefC (814 aa).

The first 30 residues, 1 to 30, serve as a signal peptide directing secretion; it reads MKKTTITLFVLTSVFHSGNVFSRQYNFDYG. A disulfide bridge links Cys792 with Cys813.

The protein belongs to the fimbrial export usher family.

It is found in the cell outer membrane. Its function is as follows. Involved in the export and assembly of the SefA fimbrial subunit. This Salmonella enteritidis protein is Outer membrane usher protein SefC (sefC).